Here is a 582-residue protein sequence, read N- to C-terminus: V-type ATP synthase alpha chain (582 aa).

ATP is bound at residue 231-238 (GPFGSGKT).

The protein belongs to the ATPase alpha/beta chains family.

The enzyme catalyses ATP + H2O + 4 H(+)(in) = ADP + phosphate + 5 H(+)(out). In terms of biological role, produces ATP from ADP in the presence of a proton gradient across the membrane. The V-type alpha chain is a catalytic subunit. The protein is V-type ATP synthase alpha chain of Deinococcus geothermalis (strain DSM 11300 / CIP 105573 / AG-3a).